The chain runs to 77 residues: Metallothionein-like protein 2 (77 aa).

This sequence belongs to the metallothionein superfamily. Type 15 family.

Functionally, metallothioneins have a high content of cysteine residues that bind various heavy metals. This Trifolium repens (Creeping white clover) protein is Metallothionein-like protein 2 (MT1A).